Here is a 75-residue protein sequence, read N- to C-terminus: Small ribosomal subunit protein bS18 (75 aa).

The protein belongs to the bacterial ribosomal protein bS18 family. Part of the 30S ribosomal subunit. Forms a tight heterodimer with protein bS6.

Its function is as follows. Binds as a heterodimer with protein bS6 to the central domain of the 16S rRNA, where it helps stabilize the platform of the 30S subunit. The sequence is that of Small ribosomal subunit protein bS18 from Yersinia enterocolitica serotype O:8 / biotype 1B (strain NCTC 13174 / 8081).